The following is a 78-amino-acid chain: uncharacterized protein (78 aa).

The next 2 helical transmembrane spans lie at 25 to 45 (IITA…DEVV) and 50 to 70 (KCAD…FVFV).

The protein resides in the membrane. This is an uncharacterized protein from Saccharomyces cerevisiae (strain ATCC 204508 / S288c) (Baker's yeast).